Consider the following 129-residue polypeptide: Translation initiation factor 5A (129 aa).

Hypusine is present on Lys-36.

The protein belongs to the eIF-5A family.

It localises to the cytoplasm. Functionally, functions by promoting the formation of the first peptide bond. The sequence is that of Translation initiation factor 5A from Picrophilus torridus (strain ATCC 700027 / DSM 9790 / JCM 10055 / NBRC 100828 / KAW 2/3).